Consider the following 598-residue polypeptide: Elongation factor 4 (598 aa).

Residues 4-186 form the tr-type G domain; it reads SHIRNFAIIA…AIVSRLPAPS (183 aa). Residues 16 to 21 and 133 to 136 each bind GTP; these read DHGKST and NKID.

The protein belongs to the TRAFAC class translation factor GTPase superfamily. Classic translation factor GTPase family. LepA subfamily.

Its subcellular location is the cell inner membrane. It carries out the reaction GTP + H2O = GDP + phosphate + H(+). Its function is as follows. Required for accurate and efficient protein synthesis under certain stress conditions. May act as a fidelity factor of the translation reaction, by catalyzing a one-codon backward translocation of tRNAs on improperly translocated ribosomes. Back-translocation proceeds from a post-translocation (POST) complex to a pre-translocation (PRE) complex, thus giving elongation factor G a second chance to translocate the tRNAs correctly. Binds to ribosomes in a GTP-dependent manner. This Ehrlichia chaffeensis (strain ATCC CRL-10679 / Arkansas) protein is Elongation factor 4.